A 1337-amino-acid chain; its full sequence is Protein HEG homolog 1 (1337 aa).

The N-terminal stretch at 1 to 31 (MATPRAPRWPPPSLLLLLLLPLLLLPPAAPG) is a signal peptide. Low complexity-rich tracts occupy residues 28 to 40 (AAPGARGSLPSPA) and 54 to 66 (PGAGHTAPGPGVA). 6 disordered regions span residues 28-149 (AAPG…SNMA), 175-211 (SSLLSLESLPESPSSSRSQRRITPSQTESGTSLGFLE), 235-296 (ASHP…QNPS), 313-675 (VPRT…PSPI), 723-767 (LIPS…TVSL), and 860-909 (EGNR…PQTT). Residues 32-1204 (ARGSLPSPAH…GLNCGNPYQL (1173 aa)) are Extracellular-facing. A compositionally biased stretch (polar residues) spans 118–131 (TAQNARMSHSSSEG). The segment covering 175 to 190 (SSLLSLESLPESPSSS) has biased composition (low complexity). Polar residues-rich tracts occupy residues 195 to 206 (RITPSQTESGTS), 247 to 258 (VLSQKRNSSGQE), 283 to 296 (IKNGNNFTALQNPS), and 340 to 361 (GITSMSVRSSPSVKDSRTNSGL). Residues 470-480 (RGGGEDSGMGG) are compositionally biased toward gly residues. Composition is skewed to low complexity over residues 486–502 (SSSSSSSTSSSESLDSS) and 556–575 (SYSEASESSTSSVKISDSPS). 2 stretches are compositionally biased toward polar residues: residues 576-585 (QAQPKQSSMS) and 592-617 (AQSSTESPVLHTSNLPTYTSTVNMPN). Residues 637 to 675 (PSTQPSPSQPQPFSSALPSTRSPGSTSETTTSSPSPSPI) show a composition bias toward low complexity. Composition is skewed to polar residues over residues 725-742 (PSNQTANPKNQSTPQQEK) and 751-763 (SLVSPPTDSTKAV). Residues 868-884 (PTTQPIPLTTSTTSAGE) are compositionally biased toward low complexity. Basic and acidic residues predominate over residues 885 to 896 (RTTELGRAEESS). Residues 897–909 (PSHFLTPSSPQTT) show a composition bias toward polar residues. Positions 941–979 (PVNSCTVNPCLHDGKCIVDLTGRGYRCVCPPAWQGENCS) constitute an EGF-like 1 domain. 6 disulfide bridges follow: C945/C956, C950/C967, C969/C978, C985/C996, C990/C1005, and C1007/C1018. The EGF-like 2; calcium-binding domain maps to 981 to 1019 (DVNECLSSPCPPLATCNNTQGSFTCRCPVGYQLEKGICN). The N-linked (GlcNAc...) asparagine glycan is linked to N1093. The chain crosses the membrane as a helical span at residues 1205–1225 (ITVVIAAAGGGLLLILGVALI). Topologically, residues 1226–1337 (VTCCRKSKND…SDESRRRDYF (112 aa)) are cytoplasmic. S1315 is modified (phosphoserine).

As to quaternary structure, interacts with CCM2 and KRIT1; KRIT1 markedly facilitates interaction with CCM2.

The protein localises to the cell membrane. It localises to the cell junction. Receptor component of the CCM signaling pathway which is a crucial regulator of heart and vessel formation and integrity. May be acting by stabilizing endothelial cell junctions. The sequence is that of Protein HEG homolog 1 (Heg1) from Mus musculus (Mouse).